A 93-amino-acid chain; its full sequence is UPF0223 protein YfdD (93 aa).

The protein belongs to the UPF0223 family.

This is UPF0223 protein YfdD (yfdD) from Lactococcus lactis subsp. lactis (strain IL1403) (Streptococcus lactis).